We begin with the raw amino-acid sequence, 146 residues long: Large ribosomal subunit protein uL15 (146 aa).

Basic and acidic residues predominate over residues 1 to 13 (MKLNELKPNEGSR). The segment at 1 to 54 (MKLNELKPNEGSRRNRKRVGRGTSSGYGKTAGRGQKGQLARTGGKTRLGFEGGQ) is disordered. Gly residues predominate over residues 23 to 35 (TSSGYGKTAGRGQ).

Belongs to the universal ribosomal protein uL15 family. As to quaternary structure, part of the 50S ribosomal subunit.

Its function is as follows. Binds to the 23S rRNA. This chain is Large ribosomal subunit protein uL15, found in Lactobacillus gasseri (strain ATCC 33323 / DSM 20243 / BCRC 14619 / CIP 102991 / JCM 1131 / KCTC 3163 / NCIMB 11718 / NCTC 13722 / AM63).